The sequence spans 262 residues: Small ribosomal subunit protein eS1 (262 aa).

This sequence belongs to the eukaryotic ribosomal protein eS1 family. Component of the small ribosomal subunit. Mature ribosomes consist of a small (40S) and a large (60S) subunit. The 40S subunit contains about 33 different proteins and 1 molecule of RNA (18S). The 60S subunit contains about 49 different proteins and 3 molecules of RNA (25S, 5.8S and 5S).

The protein localises to the cytoplasm. In Theileria parva (East coast fever infection agent), this protein is Small ribosomal subunit protein eS1.